The sequence spans 126 residues: Large ribosomal subunit protein bL12 (126 aa).

This sequence belongs to the bacterial ribosomal protein bL12 family. Homodimer. Part of the ribosomal stalk of the 50S ribosomal subunit. Forms a multimeric L10(L12)X complex, where L10 forms an elongated spine to which 2 to 4 L12 dimers bind in a sequential fashion. Binds GTP-bound translation factors.

In terms of biological role, forms part of the ribosomal stalk which helps the ribosome interact with GTP-bound translation factors. Is thus essential for accurate translation. This Corynebacterium diphtheriae (strain ATCC 700971 / NCTC 13129 / Biotype gravis) protein is Large ribosomal subunit protein bL12.